A 950-amino-acid chain; its full sequence is ABC transporter A family member 9 (950 aa).

Transmembrane regions (helical) follow at residues 31 to 51 (ATCL…SIEE), 223 to 243 (IISA…MFGF), 276 to 296 (WLIW…LFGM), 308 to 328 (FVLV…LAFA), 342 to 362 (VGFL…AGFP), and 426 to 446 (IWLV…DNII). The 246-residue stretch at 520-765 (VQIHGLAKTY…FGTGFVATVS (246 aa)) folds into the ABC transporter domain. 566–573 (GPNGAGKT) is a binding site for ATP.

The protein belongs to the ABC transporter superfamily. ABCA family. CPR flippase (TC 3.A.1.211) subfamily. In terms of tissue distribution, highly expressed in siliques. Detected in seedlings, rosette leaves, stems and flowers.

It localises to the endoplasmic reticulum membrane. In terms of biological role, mediates the transport of acyl-CoAs and/or free fatty acids to the endoplasmic reticulum. Has no effect on the selectivity of fatty acid incorporation into triacylglycerol or further desaturation steps. In Arabidopsis thaliana (Mouse-ear cress), this protein is ABC transporter A family member 9 (ABCA9).